Here is a 416-residue protein sequence, read N- to C-terminus: Putative competence-damage inducible protein (416 aa).

It belongs to the CinA family.

The protein is Putative competence-damage inducible protein of Bacillus subtilis (strain 168).